The following is an 845-amino-acid chain: U-box domain-containing protein 52 (845 aa).

Disordered stretches follow at residues 180 to 210 and 229 to 258; these read RPSE…LPPE and SPAL…EVST. A compositionally biased stretch (low complexity) spans 187-204; it reads SGSIRFERSSSTSGSTDS. Polar residues predominate over residues 236–251; sequence MGSNAVAQMDTSSSGT. A coiled-coil region spans residues 351 to 468; that stretch reads SITDNQVNLN…REKDKLQASL (118 aa). Residues 490–754 enclose the Protein kinase domain; that stretch reads FAENLKIGIG…DLKDQIIPAL (265 aa). Residues 496–504 and Lys517 each bind ATP; that span reads IGIGAYGSV. Asp612 (proton acceptor) is an active-site residue. One can recognise a U-box domain in the interval 774–845; that stretch reads GPPSHFICPL…AIMEWKSNKR (72 aa).

It belongs to the protein kinase superfamily. Ser/Thr protein kinase family.

The catalysed reaction is L-seryl-[protein] + ATP = O-phospho-L-seryl-[protein] + ADP + H(+). The enzyme catalyses L-threonyl-[protein] + ATP = O-phospho-L-threonyl-[protein] + ADP + H(+). It catalyses the reaction S-ubiquitinyl-[E2 ubiquitin-conjugating enzyme]-L-cysteine + [acceptor protein]-L-lysine = [E2 ubiquitin-conjugating enzyme]-L-cysteine + N(6)-ubiquitinyl-[acceptor protein]-L-lysine.. It functions in the pathway protein modification; protein ubiquitination. Its function is as follows. Functions as an E3 ubiquitin ligase. This is U-box domain-containing protein 52 (PUB52) from Arabidopsis thaliana (Mouse-ear cress).